The chain runs to 223 residues: Holliday junction branch migration complex subunit RuvA (223 aa).

The interval 1-67 is domain I; sequence MIGWLKGEKI…EDGSNLFGFI (67 aa). The interval 68–146 is domain II; sequence EKSERDLFRK…DFDLNNEFSP (79 aa). The segment at 147–157 is flexible linker; that stretch reads PTKLRPESAED. The segment at 158–223 is domain III; the sequence is LNEELLTEIK…FKQALITLNK (66 aa).

The protein belongs to the RuvA family. In terms of assembly, homotetramer. Forms an RuvA(8)-RuvB(12)-Holliday junction (HJ) complex. HJ DNA is sandwiched between 2 RuvA tetramers; dsDNA enters through RuvA and exits via RuvB. An RuvB hexamer assembles on each DNA strand where it exits the tetramer. Each RuvB hexamer is contacted by two RuvA subunits (via domain III) on 2 adjacent RuvB subunits; this complex drives branch migration. In the full resolvosome a probable DNA-RuvA(4)-RuvB(12)-RuvC(2) complex forms which resolves the HJ.

It localises to the cytoplasm. Its function is as follows. The RuvA-RuvB-RuvC complex processes Holliday junction (HJ) DNA during genetic recombination and DNA repair, while the RuvA-RuvB complex plays an important role in the rescue of blocked DNA replication forks via replication fork reversal (RFR). RuvA specifically binds to HJ cruciform DNA, conferring on it an open structure. The RuvB hexamer acts as an ATP-dependent pump, pulling dsDNA into and through the RuvAB complex. HJ branch migration allows RuvC to scan DNA until it finds its consensus sequence, where it cleaves and resolves the cruciform DNA. The sequence is that of Holliday junction branch migration complex subunit RuvA from Prochlorococcus marinus (strain MIT 9211).